The following is a 37-amino-acid chain: Large ribosomal subunit protein bL36 (37 aa).

It belongs to the bacterial ribosomal protein bL36 family.

The protein is Large ribosomal subunit protein bL36 of Endomicrobium trichonymphae.